Here is a 43-residue protein sequence, read N- to C-terminus: Protein PsbN (43 aa).

A helical transmembrane segment spans residues 5–27 (TLVXISISGSLVSFTGYALYTAF).

It belongs to the PsbN family.

It is found in the plastid. It localises to the chloroplast thylakoid membrane. In terms of biological role, may play a role in photosystem I and II biogenesis. This chain is Protein PsbN, found in Calycanthus floridus (Eastern sweetshrub).